The primary structure comprises 110 residues: Transcription factor S (110 aa).

8 residues coordinate Zn(2+): Cys-4, Cys-7, Cys-22, Cys-25, Cys-71, Cys-74, Cys-99, and Cys-102. The C4-type zinc-finger motif lies at Cys-4–Cys-25. The segment at Thr-67–Arg-107 adopts a TFIIS-type zinc-finger fold.

Belongs to the archaeal RpoM/eukaryotic RPA12/RPB9/RPC11 RNA polymerase family.

Induces RNA cleavage activity in the RNA polymerase. In its presence, the cleavage activity of the RNA polymerase truncates the RNA back to position +15 in a stepwise manner by releasing mainly dinucleotides from the 3'-end of the nascent RNA. The truncated RNAs are able to continue elongation. Involved in transcriptional proofreading and fidelity. Misincorporation of nucleotides during elongation of transcription leads to arrested elongation complexes which are rescued by TFS-promoted removal of a dinucleotide from the 3'-end. TFS is able to induce a cleavage resynthesis cycle in stalled elongation complexes (resulting from the next missing nucleotide or a reduced incorporation rate of a wrong nucleotide) preventing misincorporation and enabling proofreading in a post-incorporation manner. Pausing of elongation complexes is the main determinant of TFS-induced RNA cleavage. In Thermococcus celer, this protein is Transcription factor S.